Reading from the N-terminus, the 739-residue chain is Catalase-peroxidase 2 (739 aa).

The N-terminal stretch at M1–A26 is a signal peptide. A cross-link (tryptophyl-tyrosyl-methioninium (Trp-Tyr) (with M-253)) is located at residues W105 to Y227. The Proton acceptor role is filled by H106. The tryptophyl-tyrosyl-methioninium (Tyr-Met) (with W-105) cross-link spans Y227–M253. Residue H268 coordinates heme b.

It belongs to the peroxidase family. Peroxidase/catalase subfamily. In terms of assembly, homodimer or homotetramer. It depends on heme b as a cofactor. Post-translationally, formation of the three residue Trp-Tyr-Met cross-link is important for the catalase, but not the peroxidase activity of the enzyme.

The catalysed reaction is H2O2 + AH2 = A + 2 H2O. The enzyme catalyses 2 H2O2 = O2 + 2 H2O. Its function is as follows. Bifunctional enzyme with both catalase and broad-spectrum peroxidase activity. The sequence is that of Catalase-peroxidase 2 from Shewanella sp. (strain MR-7).